A 303-amino-acid chain; its full sequence is MIVTGATNVKSTELSETARAKVNLTLRVVGRRADGFHDLESVVAFADCVDRLTLMPGTDLSLVAGGPRAQECGQAADNLVLKAARLLGERVANLTTGVFALDKHLPVAAGIGGGSADAAAALRLLARANGIAIGDPRLIEAARLTGADVPVCVCSEACVMTGVGETLQPLGLPAMPAVLVNPRVPVATKDVFAALGLRKGELHVGVSDVIEAIVWPKTGAPMNDWLAMLADGTNDLEPPAIRVQPVIGEVLARLRATGARLSRMSGSGATCFAIFGNEADARNAAQTIRLDRPQWWVHAGTLS.

The active site involves Lys-21. An ATP-binding site is contributed by 106–116 (PVAAGIGGGSA). The active site involves Asp-148.

It belongs to the GHMP kinase family. IspE subfamily.

It catalyses the reaction 4-CDP-2-C-methyl-D-erythritol + ATP = 4-CDP-2-C-methyl-D-erythritol 2-phosphate + ADP + H(+). The protein operates within isoprenoid biosynthesis; isopentenyl diphosphate biosynthesis via DXP pathway; isopentenyl diphosphate from 1-deoxy-D-xylulose 5-phosphate: step 3/6. Functionally, catalyzes the phosphorylation of the position 2 hydroxy group of 4-diphosphocytidyl-2C-methyl-D-erythritol. This Nitrobacter hamburgensis (strain DSM 10229 / NCIMB 13809 / X14) protein is 4-diphosphocytidyl-2-C-methyl-D-erythritol kinase.